The following is a 274-amino-acid chain: Ciliary microtubule inner protein 2B (274 aa).

Disordered regions lie at residues 46–89 (SPGL…SSMV) and 119–171 (TQRN…MDDR). The segment covering 130–155 (LPKEAKGEKDVEKDQEPKPEVEKEPE) has biased composition (basic and acidic residues).

The protein belongs to the CIMIP2 family. Microtubule inner protein component of sperm flagellar doublet microtubules. As to expression, expressed in trachea multiciliated cells.

Its subcellular location is the cytoplasm. It localises to the cytoskeleton. It is found in the cilium axoneme. The protein localises to the flagellum axoneme. Functionally, microtubule inner protein (MIP) part of the dynein-decorated doublet microtubules (DMTs) in cilia axoneme, which is required for motile cilia beating. The sequence is that of Ciliary microtubule inner protein 2B (CIMIP2B) from Bos taurus (Bovine).